Reading from the N-terminus, the 426-residue chain is Serine--tRNA ligase (426 aa).

Threonine 230–glutamate 232 serves as a coordination point for L-serine. Arginine 261–glutamate 263 contributes to the ATP binding site. Residue glutamate 284 coordinates L-serine. Glutamate 348–serine 351 contributes to the ATP binding site. Residue serine 385 participates in L-serine binding.

This sequence belongs to the class-II aminoacyl-tRNA synthetase family. Type-1 seryl-tRNA synthetase subfamily. In terms of assembly, homodimer. The tRNA molecule binds across the dimer.

The protein resides in the cytoplasm. It carries out the reaction tRNA(Ser) + L-serine + ATP = L-seryl-tRNA(Ser) + AMP + diphosphate + H(+). It catalyses the reaction tRNA(Sec) + L-serine + ATP = L-seryl-tRNA(Sec) + AMP + diphosphate + H(+). It functions in the pathway aminoacyl-tRNA biosynthesis; selenocysteinyl-tRNA(Sec) biosynthesis; L-seryl-tRNA(Sec) from L-serine and tRNA(Sec): step 1/1. Functionally, catalyzes the attachment of serine to tRNA(Ser). Is also able to aminoacylate tRNA(Sec) with serine, to form the misacylated tRNA L-seryl-tRNA(Sec), which will be further converted into selenocysteinyl-tRNA(Sec). The chain is Serine--tRNA ligase from Wolbachia pipientis subsp. Culex pipiens (strain wPip).